The chain runs to 408 residues: LL-diaminopimelate aminotransferase (408 aa).

2 residues coordinate substrate: Tyr15 and Gly42. Residues Tyr72, 108–109, Tyr132, Asn187, Tyr218, and 246–248 each bind pyridoxal 5'-phosphate; these read SK and SFS. Substrate contacts are provided by Lys109, Tyr132, and Asn187. An N6-(pyridoxal phosphate)lysine modification is found at Lys249. Pyridoxal 5'-phosphate is bound by residues Arg257 and Asn292. Substrate is bound by residues Asn292 and Arg388.

This sequence belongs to the class-I pyridoxal-phosphate-dependent aminotransferase family. LL-diaminopimelate aminotransferase subfamily. In terms of assembly, homodimer. Requires pyridoxal 5'-phosphate as cofactor.

The catalysed reaction is (2S,6S)-2,6-diaminopimelate + 2-oxoglutarate = (S)-2,3,4,5-tetrahydrodipicolinate + L-glutamate + H2O + H(+). It functions in the pathway amino-acid biosynthesis; L-lysine biosynthesis via DAP pathway; LL-2,6-diaminopimelate from (S)-tetrahydrodipicolinate (aminotransferase route): step 1/1. Its function is as follows. Involved in the synthesis of meso-diaminopimelate (m-DAP or DL-DAP), required for both lysine and peptidoglycan biosynthesis. Catalyzes the direct conversion of tetrahydrodipicolinate to LL-diaminopimelate. This is LL-diaminopimelate aminotransferase from Prochlorococcus marinus (strain MIT 9303).